A 568-amino-acid polypeptide reads, in one-letter code: Sulfite reductase [NADPH] hemoprotein beta-component (568 aa).

Residues C425, C431, C470, and C474 each coordinate [4Fe-4S] cluster. A siroheme-binding site is contributed by C474.

It belongs to the nitrite and sulfite reductase 4Fe-4S domain family. Alpha(8)-beta(8). The alpha component is a flavoprotein, the beta component is a hemoprotein. Siroheme serves as cofactor. The cofactor is [4Fe-4S] cluster.

The catalysed reaction is hydrogen sulfide + 3 NADP(+) + 3 H2O = sulfite + 3 NADPH + 4 H(+). It participates in sulfur metabolism; hydrogen sulfide biosynthesis; hydrogen sulfide from sulfite (NADPH route): step 1/1. Its function is as follows. Component of the sulfite reductase complex that catalyzes the 6-electron reduction of sulfite to sulfide. This is one of several activities required for the biosynthesis of L-cysteine from sulfate. The sequence is that of Sulfite reductase [NADPH] hemoprotein beta-component from Xanthomonas euvesicatoria pv. vesicatoria (strain 85-10) (Xanthomonas campestris pv. vesicatoria).